Reading from the N-terminus, the 121-residue chain is uncharacterized protein (121 aa).

The protein to M.jannaschii MJ0017 and MJ1466.

This is an uncharacterized protein from Aquifex aeolicus (strain VF5).